Here is a 344-residue protein sequence, read N- to C-terminus: Plastoglobule-localized metallopeptidase 48, chloroplastic (344 aa).

The transit peptide at 1–47 (MAVSVSAPVLSLCYNQSGELSRSLGYRLPKKVGFSSGRRSVSYIGFG) directs the protein to the chloroplast. Helical transmembrane passes span 102 to 122 (LLGSMTEQIMLLENIGTSVLV) and 169 to 189 (FIVVHTSLIELLTSAELQAVL). Zn(2+) is bound at residue histidine 191. Glutamate 192 is an active-site residue. Histidine 195 serves as a coordination point for Zn(2+). Residues 201-221 (GVWLTFANILTLGAYTVPAFG) form a helical membrane-spanning segment. Glutamate 240 contacts Zn(2+). The chain crosses the membrane as a helical span at residues 256 to 272 (VVVSVLMKLAGGCPSIA).

The protein belongs to the peptidase M48 family. M48D subfamily. Interacts with plastoglobule (PG) core proteins ABC1K3, PES1 and CCD4. It depends on Zn(2+) as a cofactor. In terms of tissue distribution, mostly expressed in flowers (e.g. sepals, petals and stamen), seeds, leaves and cotyledons.

The protein localises to the plastid. Its subcellular location is the chloroplast. The protein resides in the plastoglobule. It is found in the chloroplast membrane. Metalloendopeptidase with a Zn-dependent proteolytic activity and substrate cleavage upstream of hydrophobic residues. Positive regulator of senescence, probably by degrading CCD4, thus participating in the controlled removal of carotenoids from the thylakoid membrane during the senescence process. In Arabidopsis thaliana (Mouse-ear cress), this protein is Plastoglobule-localized metallopeptidase 48, chloroplastic.